Reading from the N-terminus, the 310-residue chain is Olfactory receptor 5P55 (310 aa).

Over Met1–Val25 the chain is Extracellular. The N-linked (GlcNAc...) asparagine glycan is linked to Asn5. The helical transmembrane segment at Ile26–Ile46 threads the bilayer. Residues Ser47–Gln54 are Cytoplasmic-facing. A helical transmembrane segment spans residues Leu55 to Thr75. At Ser76–Ala99 the chain is on the extracellular side. Cys97 and Cys189 are disulfide-bonded. A helical membrane pass occupies residues Gln100–Tyr120. The Cytoplasmic portion of the chain corresponds to Asp121 to Ser133. Residues Thr134–Val154 traverse the membrane as a helical segment. Topologically, residues Asn155–Gly196 are extracellular. A helical membrane pass occupies residues Ile197 to Ser217. Residues Tyr218–Ala237 lie on the Cytoplasmic side of the membrane. Residues Phe238–Ile258 form a helical membrane-spanning segment. The Extracellular portion of the chain corresponds to Tyr259 to Asn271. N-linked (GlcNAc...) asparagine glycosylation is present at Asn265. Residues Lys272–Leu292 traverse the membrane as a helical segment. Residues Arg293–Pro310 lie on the Cytoplasmic side of the membrane.

The protein belongs to the G-protein coupled receptor 1 family.

The protein resides in the cell membrane. Potential odorant receptor. The sequence is that of Olfactory receptor 5P55 from Mus musculus (Mouse).